A 154-amino-acid chain; its full sequence is Myoglobin (154 aa).

Positions 2–148 (GLSDDEWNHV…FRNDMASKYK (147 aa)) constitute a Globin domain. Position 65 (His65) interacts with nitrite. His65 lines the O2 pocket. Residue His94 coordinates heme b.

This sequence belongs to the globin family. In terms of assembly, monomeric.

Its subcellular location is the cytoplasm. The protein resides in the sarcoplasm. It catalyses the reaction Fe(III)-heme b-[protein] + nitric oxide + H2O = Fe(II)-heme b-[protein] + nitrite + 2 H(+). It carries out the reaction H2O2 + AH2 = A + 2 H2O. Monomeric heme protein which primary function is to store oxygen and facilitate its diffusion within muscle tissues. Reversibly binds oxygen through a pentacoordinated heme iron and enables its timely and efficient release as needed during periods of heightened demand. Depending on the oxidative conditions of tissues and cells, and in addition to its ability to bind oxygen, it also has a nitrite reductase activity whereby it regulates the production of bioactive nitric oxide. Under stress conditions, like hypoxia and anoxia, it also protects cells against reactive oxygen species thanks to its pseudoperoxidase activity. The protein is Myoglobin (MB) of Caretta caretta (Loggerhead sea turtle).